The sequence spans 382 residues: MYIAGVMSGTSLDGIDVALVRIEGSGVESKVELIHFTTVPFCNDIKSEIQQALSIENSNVQLICSLNFKLGLCFANAVKEVCKEANFSLEQLDLIGSHGQTIYHQPKQDGNRIPSTLQIGEPAVIAYETNTTVISNFRTMDMAAGGQGAPLVPYSEVILYRDPSKNRLLQNIGGISNVTVIPNQQSDQNVIAFDTGPGNMIIDEVCQRLFQLSYDQNGEIAKQGRVVDEILTYCMSHPFLKMNPPKSTGREQFGEKFASELLKRFEKHSKENILTTVTMFTANSIVHHYKKFILPYYEIDEVILGGGGSYNSTLVEMLRNGLKDENCAIFIQEDIGYSSEAKEAIAFAILANETHHCNPSNVPSATGAKQSVVFGNITFPPV.

9-16 contributes to the ATP binding site; that stretch reads GTSLDGID.

This sequence belongs to the anhydro-N-acetylmuramic acid kinase family.

The enzyme catalyses 1,6-anhydro-N-acetyl-beta-muramate + ATP + H2O = N-acetyl-D-muramate 6-phosphate + ADP + H(+). The protein operates within amino-sugar metabolism; 1,6-anhydro-N-acetylmuramate degradation. It functions in the pathway cell wall biogenesis; peptidoglycan recycling. In terms of biological role, catalyzes the specific phosphorylation of 1,6-anhydro-N-acetylmuramic acid (anhMurNAc) with the simultaneous cleavage of the 1,6-anhydro ring, generating MurNAc-6-P. Is required for the utilization of anhMurNAc either imported from the medium or derived from its own cell wall murein, and thus plays a role in cell wall recycling. In Bacillus anthracis (strain A0248), this protein is Anhydro-N-acetylmuramic acid kinase.